Reading from the N-terminus, the 286-residue chain is 4-diphosphocytidyl-2-C-methyl-D-erythritol kinase (286 aa).

Residue Lys10 is part of the active site. Residue 100-110 (PMGSGLGGGSS) participates in ATP binding. Asp142 is an active-site residue.

It belongs to the GHMP kinase family. IspE subfamily. Homodimer.

It catalyses the reaction 4-CDP-2-C-methyl-D-erythritol + ATP = 4-CDP-2-C-methyl-D-erythritol 2-phosphate + ADP + H(+). It functions in the pathway isoprenoid biosynthesis; isopentenyl diphosphate biosynthesis via DXP pathway; isopentenyl diphosphate from 1-deoxy-D-xylulose 5-phosphate: step 3/6. Its function is as follows. Catalyzes the phosphorylation of the position 2 hydroxy group of 4-diphosphocytidyl-2C-methyl-D-erythritol. The sequence is that of 4-diphosphocytidyl-2-C-methyl-D-erythritol kinase from Buchnera aphidicola subsp. Acyrthosiphon pisum (strain APS) (Acyrthosiphon pisum symbiotic bacterium).